Reading from the N-terminus, the 204-residue chain is MLTLDIDPYTILVTSFLILAIQKLVTVIGKQKIQLYIWQIYTKYLSHSQSIKQFNLKQKEIKDLTKQQKLISAQDEYAKWTKINRALDKLKLEVQELNETIAGEKTRIDSITKLAITLILTLPIWFLRIFCRKTALLYIRKGILPAYLEWWLALPFFKSGTIGLTCWMFVVNSVLSNLIFLISFPFTQKVERPIKPKNEQKTES.

Residues 1–11 (MLTLDIDPYTI) lie on the Lumenal side of the membrane. The chain crosses the membrane as a helical span at residues 12–31 (LVTSFLILAIQKLVTVIGKQ). Over 32–116 (KIQLYIWQIY…RIDSITKLAI (85 aa)) the chain is Cytoplasmic. Positions 78 to 113 (AKWTKINRALDKLKLEVQELNETIAGEKTRIDSITK) form a coiled coil. Residues 117–137 (TLILTLPIWFLRIFCRKTALL) form a helical membrane-spanning segment. Topologically, residues 138–161 (YIRKGILPAYLEWWLALPFFKSGT) are lumenal. A helical transmembrane segment spans residues 162–178 (IGLTCWMFVVNSVLSNL). At 179-204 (IFLISFPFTQKVERPIKPKNEQKTES) the chain is on the cytoplasmic side.

It belongs to the WRB/GET1 family. Component of the Golgi to ER traffic (GET) complex, which is composed of GET1, GET2 and GET3. Within the complex, GET1 and GET2 form a heterotetramer which is stabilized by phosphatidylinositol binding and which binds to the GET3 homodimer.

The protein localises to the endoplasmic reticulum membrane. It localises to the golgi apparatus membrane. Required for the post-translational delivery of tail-anchored (TA) proteins to the endoplasmic reticulum. Together with GET2, acts as a membrane receptor for soluble GET3, which recognizes and selectively binds the transmembrane domain of TA proteins in the cytosol. The GET complex cooperates with the HDEL receptor ERD2 to mediate the ATP-dependent retrieval of resident ER proteins that contain a C-terminal H-D-E-L retention signal from the Golgi to the ER. The polypeptide is Golgi to ER traffic protein 1 (Lodderomyces elongisporus (strain ATCC 11503 / CBS 2605 / JCM 1781 / NBRC 1676 / NRRL YB-4239) (Yeast)).